The following is a 358-amino-acid chain: Serine/threonine-protein phosphatase 2A activator (358 aa).

The tract at residues 1 to 20 (MAEGERQPPPDSSEEAPPAT) is disordered. Ala-2 carries the post-translational modification N-acetylalanine. ATP-binding residues include Arg-183, Thr-188, and Gly-189. Gly-243 and Asp-249 together coordinate Mg(2+). Residues Pro-339, Gln-342, and His-343 each contribute to the ATP site.

This sequence belongs to the PTPA-type PPIase family. In terms of assembly, associates with PP2A heterodimeric core enzyme PP2A(D), composed of a 36 kDa catalytic subunit (subunit C) and a 65 kDa constant regulatory subunit (PR65 or subunit A). Interacts with the catalytic subunit PPP2CA (via C-terminus). Interacts with PPP2CB. Widely expressed.

Its subcellular location is the cytoplasm. It is found in the nucleus. The catalysed reaction is [protein]-peptidylproline (omega=180) = [protein]-peptidylproline (omega=0). PPIases accelerate the folding of proteins. It catalyzes the cis-trans isomerization of proline imidic peptide bonds in oligopeptides. Acts as a regulatory subunit for serine/threonine-protein phosphatase 2A (PP2A). Modulates PP2A activity or substrate specificity, probably by inducing a conformational change in the catalytic subunit, a proposed direct target of the PPIase. Can reactivate inactive phosphatase PP2A-phosphatase methylesterase complexes (PP2A(i)) in presence of ATP and Mg(2+). Reversibly stimulates the variable phosphotyrosyl phosphatase activity of PP2A core heterodimer PP2A(D) in presence of ATP and Mg(2+) (in vitro). The phosphotyrosyl phosphatase activity is dependent of an ATPase activity of the PP2A(D):PPP2R4 complex. Is involved in apoptosis; the function appears to be independent from PP2A. In Homo sapiens (Human), this protein is Serine/threonine-protein phosphatase 2A activator.